Consider the following 393-residue polypeptide: S-adenosylmethionine synthase (393 aa).

A Mg(2+)-binding site is contributed by E9. H15 serves as a coordination point for ATP. E43 contributes to the K(+) binding site. 2 residues coordinate L-methionine: E56 and Q99. Residues 167–169 (DGK), 235–238 (SGRF), D246, 252–253 (RK), A269, K273, and K277 contribute to the ATP site. D246 is an L-methionine binding site. K277 provides a ligand contact to L-methionine.

It belongs to the AdoMet synthase family. As to quaternary structure, homotetramer. It depends on Mn(2+) as a cofactor. Mg(2+) serves as cofactor. The cofactor is Co(2+). K(+) is required as a cofactor.

It localises to the cytoplasm. It catalyses the reaction L-methionine + ATP + H2O = S-adenosyl-L-methionine + phosphate + diphosphate. The protein operates within amino-acid biosynthesis; S-adenosyl-L-methionine biosynthesis; S-adenosyl-L-methionine from L-methionine: step 1/1. Functionally, catalyzes the formation of S-adenosylmethionine from methionine and ATP. The reaction comprises two steps that are both catalyzed by the same enzyme: formation of S-adenosylmethionine (AdoMet) and triphosphate, and subsequent hydrolysis of the triphosphate. The sequence is that of S-adenosylmethionine synthase (SAM) from Camellia sinensis (Tea plant).